Consider the following 610-residue polypeptide: MDLHQKIRTLPTSPGVYLYKNAEGEIIYVGKAKNLRSRVGSYFVRGADENSKTGSLLREAVDVEYIVVDNEKEALALENNLIKQKKPRFNILLRDDKTYPYIKLTMGEKWPRVYVTRRLKKDGSEYYGPFFPANLAYRVVDLIHRNFLVPSCYIDLRRYHPRPCLQHYIGRCLGPCVEGLTNEVQYGEAVKDVKLFLEGRHSDLKQSLTARMNKAAEGMQFELAAKYRDLITTVEDLHQKQRIAAAEGDDADVFGYHYENHMVAVNLFHMRGGKVLDRRDFFFEDLGEMEATGGLNTGEFFSTLLQQIYLDNKYVPRTIYVPVEFEDREALCEILSEQMHRKIDINVPQRGDKRSLIDLVAQNAKQSYDQRFRVMRPQTDVLKSVLQDTLELPELPNRIECFDISHIQGAETVASMVVWEDGKMKKSDYRKFIIKTVQGVDDFASMREVVTRRYKRIVEENQPMPSLVLIDGGVGQLHAAAGALEAIGITNQPLASIAKREEIIYVHGREDEPIRIDHHSPVLHIIQLIRDEAHRFAITFHRKRREIRDRSNELLEIPGIGEQAMKRLLRHFGSIQSIRTANATSLEAVVNRTQAEAILAHFRAEETTRS.

A GIY-YIG domain is found at 12-91; sequence TSPGVYLYKN…IKQKKPRFNI (80 aa). In terms of domain architecture, UVR spans 202 to 237; the sequence is SDLKQSLTARMNKAAEGMQFELAAKYRDLITTVEDL.

This sequence belongs to the UvrC family. In terms of assembly, interacts with UvrB in an incision complex.

The protein localises to the cytoplasm. Its function is as follows. The UvrABC repair system catalyzes the recognition and processing of DNA lesions. UvrC both incises the 5' and 3' sides of the lesion. The N-terminal half is responsible for the 3' incision and the C-terminal half is responsible for the 5' incision. The chain is UvrABC system protein C from Koribacter versatilis (strain Ellin345).